A 419-amino-acid polypeptide reads, in one-letter code: MPLSRWLRSVGVFLLPAPYWAPRERWLGSLRRPSLVHGYPVLAWHSARCWCQAWTEEPRALCSSLRMNGDQNSDVYAQEKQDFVQHFSQIVRVLTEDEMGHPEIGDAIARLKEVLEYNAIGGKYNRGLTVVVAFRELVEPRKQDADSLQRAWTVGWCVELLQAFFLVADDIMDSSLTRRGQICWYQKPGVGLDAINDANLLEACIYRLLKLYCREQPYYLNLIELFLQSSYQTEIGQTLDLLTAPQGNVDLVRFTEKRYKSIVKYKTAFYSFYLPIAAAMYMAGIDGEKEHANAKKILLEMGEFFQIQDDYLDLFGDPSVTGKIGTDIQDNKCSWLVVQCLQRATPEQYQILKENYGQKEAEKVARVKALYEELDLPAVFLQYEEDSYSHIMALIEQYAAPLPPAVFLGLARKIYKRRK.

The residue at position 1 (Met1) is an N-acetylmethionine. Lys123, Arg126, and Gln162 together coordinate isopentenyl diphosphate. Lys123 carries the post-translational modification N6-(2-hydroxyisobutyryl)lysine; alternate. Lys123 bears the N6-acetyllysine; alternate mark. Mg(2+)-binding residues include Asp169 and Asp173. Dimethylallyl diphosphate is bound at residue Arg178. Arg179 contributes to the isopentenyl diphosphate binding site. Dimethylallyl diphosphate-binding residues include Lys266, Thr267, Gln306, Lys323, and Lys332. An N6-acetyllysine modification is found at Lys353.

It belongs to the FPP/GGPP synthase family. Homodimer. Interacts with RSAD2. In terms of assembly, (Microbial infection) Interacts with HTLV-1 protein p13(II). Requires Mg(2+) as cofactor.

The protein localises to the cytoplasm. It carries out the reaction isopentenyl diphosphate + dimethylallyl diphosphate = (2E)-geranyl diphosphate + diphosphate. The catalysed reaction is isopentenyl diphosphate + (2E)-geranyl diphosphate = (2E,6E)-farnesyl diphosphate + diphosphate. It participates in isoprenoid biosynthesis; farnesyl diphosphate biosynthesis; farnesyl diphosphate from geranyl diphosphate and isopentenyl diphosphate: step 1/1. The protein operates within isoprenoid biosynthesis; geranyl diphosphate biosynthesis; geranyl diphosphate from dimethylallyl diphosphate and isopentenyl diphosphate: step 1/1. Its activity is regulated as follows. Inactivated by interferon-induced RSAD2. This inactivation may result of disruption of lipid rafts at the plasma membrane, and thus have an antiviral effect since many enveloped viruses need lipid rafts to bud efficiently out of the cell. Key enzyme in isoprenoid biosynthesis which catalyzes the formation of farnesyl diphosphate (FPP), a precursor for several classes of essential metabolites including sterols, dolichols, carotenoids, and ubiquinones. FPP also serves as substrate for protein farnesylation and geranylgeranylation. Catalyzes the sequential condensation of isopentenyl pyrophosphate with the allylic pyrophosphates, dimethylallyl pyrophosphate, and then with the resultant geranylpyrophosphate to the ultimate product farnesyl pyrophosphate. The chain is Farnesyl pyrophosphate synthase from Homo sapiens (Human).